The chain runs to 156 residues: Ribosomal RNA large subunit methyltransferase H (156 aa).

S-adenosyl-L-methionine is bound by residues Leu72, Gly103, and 122-127 (LSSLTL).

Belongs to the RNA methyltransferase RlmH family. As to quaternary structure, homodimer.

The protein localises to the cytoplasm. It carries out the reaction pseudouridine(1915) in 23S rRNA + S-adenosyl-L-methionine = N(3)-methylpseudouridine(1915) in 23S rRNA + S-adenosyl-L-homocysteine + H(+). Specifically methylates the pseudouridine at position 1915 (m3Psi1915) in 23S rRNA. The protein is Ribosomal RNA large subunit methyltransferase H of Dechloromonas aromatica (strain RCB).